The following is a 626-amino-acid chain: Carnitine O-acetyltransferase (626 aa).

Lys-93 bears the N6-succinyllysine mark. At Lys-261 the chain carries N6-acetyllysine; alternate. Position 261 is an N6-succinyllysine; alternate (Lys-261). Lys-268 carries the N6-acetyllysine modification. Catalysis depends on His-343, which acts as the Proton acceptor. CoA-binding positions include Lys-419 and 423-430; that span reads KSEKLSPD. 2 residues coordinate (R)-carnitine: Tyr-452 and Ser-454. Ser-456 contributes to the CoA binding site. Thr-465 is a binding site for (R)-carnitine. Residues Arg-504 and Gln-555 each contribute to the CoA site. Residues 624 to 626 carry the Microbody targeting signal motif; that stretch reads AKL.

The protein belongs to the carnitine/choline acetyltransferase family. In terms of assembly, monomer.

Its subcellular location is the endoplasmic reticulum. The protein resides in the peroxisome. It is found in the mitochondrion inner membrane. It carries out the reaction (R)-carnitine + acetyl-CoA = O-acetyl-(R)-carnitine + CoA. The enzyme catalyses propanoyl-CoA + (R)-carnitine = O-propanoyl-(R)-carnitine + CoA. It catalyses the reaction butanoyl-CoA + (R)-carnitine = O-butanoyl-(R)-carnitine + CoA. The catalysed reaction is hexanoyl-CoA + (R)-carnitine = O-hexanoyl-(R)-carnitine + CoA. It carries out the reaction octanoyl-CoA + (R)-carnitine = O-octanoyl-(R)-carnitine + CoA. The enzyme catalyses decanoyl-CoA + (R)-carnitine = O-decanoyl-(R)-carnitine + CoA. It catalyses the reaction 3-methylbutanoyl-CoA + (R)-carnitine = O-3-methylbutanoyl-(R)-carnitine + CoA. The catalysed reaction is 2-methylpropanoyl-CoA + (R)-carnitine = O-isobutanoyl-(R)-carnitine + CoA. It carries out the reaction 2-methylbutanoyl-CoA + (R)-carnitine = O-2-methylbutanoyl-(R)-carnitine + CoA. The enzyme catalyses acetoacetyl-CoA + (R)-carnitine = O-3-oxobutanoyl-(R)-carnitine + CoA. It catalyses the reaction 3-hydroxybutanoyl-CoA + (R)-carnitine = O-3-hydroxybutanoyl-(R)-carnitine + CoA. The catalysed reaction is 4,8-dimethylnonanoyl-CoA + (R)-carnitine = O-4,8-dimethylnonanoyl-(R)-carnitine + CoA. It carries out the reaction 2,6-dimethylheptanoyl-CoA + (R)-carnitine = O-2,6-dimethylheptanoyl-(R)-carnitine + CoA. In terms of biological role, catalyzes the reversible transfer of acyl groups from carnitine to coenzyme A (CoA) and regulates the acyl-CoA/CoA ratio. Also plays a crucial role in the transport of fatty acids for beta-oxidation. Responsible for the synthesis of short- and branched-chain acylcarnitines. Active towards some branched-chain amino acid oxidation pathway (BCAAO) intermediates. Trans-2-enoyl-CoAs and 2-methylacyl-CoAs are poor substrates. The sequence is that of Carnitine O-acetyltransferase from Mus musculus (Mouse).